A 180-amino-acid chain; its full sequence is UPF0227 protein KPN78578_10770 (180 aa).

Belongs to the UPF0227 family.

In Klebsiella pneumoniae subsp. pneumoniae (strain ATCC 700721 / MGH 78578), this protein is UPF0227 protein KPN78578_10770.